The primary structure comprises 733 residues: Acyl-coenzyme A oxidase (733 aa).

Belongs to the acyl-CoA oxidase family. FAD serves as cofactor.

It is found in the peroxisome. It catalyses the reaction a 2,3-saturated acyl-CoA + O2 = a (2E)-enoyl-CoA + H2O2. It participates in lipid metabolism; peroxisomal fatty acid beta-oxidation. The protein is Acyl-coenzyme A oxidase (POX1) of Eremothecium gossypii (strain ATCC 10895 / CBS 109.51 / FGSC 9923 / NRRL Y-1056) (Yeast).